The chain runs to 175 residues: Inorganic pyrophosphatase (175 aa).

Residues Lys-29, Arg-43, and Tyr-55 each coordinate substrate. Mg(2+) is bound by residues Asp-65, Asp-70, and Asp-102. Tyr-141 lines the substrate pocket.

The protein belongs to the PPase family. In terms of assembly, homohexamer. Mg(2+) is required as a cofactor.

The protein localises to the cytoplasm. It catalyses the reaction diphosphate + H2O = 2 phosphate + H(+). Functionally, catalyzes the hydrolysis of inorganic pyrophosphate (PPi) forming two phosphate ions. The protein is Inorganic pyrophosphatase of Rickettsia bellii (strain RML369-C).